Reading from the N-terminus, the 649-residue chain is DNA mismatch repair protein MutL (649 aa).

It belongs to the DNA mismatch repair MutL/HexB family.

In terms of biological role, this protein is involved in the repair of mismatches in DNA. It is required for dam-dependent methyl-directed DNA mismatch repair. May act as a 'molecular matchmaker', a protein that promotes the formation of a stable complex between two or more DNA-binding proteins in an ATP-dependent manner without itself being part of a final effector complex. This is DNA mismatch repair protein MutL from Streptococcus pneumoniae serotype 19F (strain G54).